We begin with the raw amino-acid sequence, 543 residues long: CTP synthase (543 aa).

The interval 1–265 (MARYIFITGG…DDEVLAAFAI (265 aa)) is amidoligase domain. Ser13 contacts CTP. Ser13 contacts UTP. 14–19 (SLGKGL) contributes to the ATP binding site. Residue Tyr54 participates in L-glutamine binding. ATP is bound at residue Asp71. Mg(2+) contacts are provided by Asp71 and Glu139. Residues 146-148 (DIE), 186-191 (KTKPTQ), and Lys222 contribute to the CTP site. Residues 186–191 (KTKPTQ) and Lys222 contribute to the UTP site. Position 238–240 (238–240 (RDA)) interacts with ATP. One can recognise a Glutamine amidotransferase type-1 domain in the interval 291–542 (TIAIVGKYTG…IEAALVRSRL (252 aa)). Residue Gly353 coordinates L-glutamine. The Nucleophile; for glutamine hydrolysis role is filled by Cys380. Residues 381 to 384 (FGMQ), Glu404, and Arg470 contribute to the L-glutamine site. Catalysis depends on residues His515 and Glu517.

It belongs to the CTP synthase family. As to quaternary structure, homotetramer.

It carries out the reaction UTP + L-glutamine + ATP + H2O = CTP + L-glutamate + ADP + phosphate + 2 H(+). The enzyme catalyses L-glutamine + H2O = L-glutamate + NH4(+). It catalyses the reaction UTP + NH4(+) + ATP = CTP + ADP + phosphate + 2 H(+). The protein operates within pyrimidine metabolism; CTP biosynthesis via de novo pathway; CTP from UDP: step 2/2. Allosterically activated by GTP, when glutamine is the substrate; GTP has no effect on the reaction when ammonia is the substrate. The allosteric effector GTP functions by stabilizing the protein conformation that binds the tetrahedral intermediate(s) formed during glutamine hydrolysis. Inhibited by the product CTP, via allosteric rather than competitive inhibition. Catalyzes the ATP-dependent amination of UTP to CTP with either L-glutamine or ammonia as the source of nitrogen. Regulates intracellular CTP levels through interactions with the four ribonucleotide triphosphates. The protein is CTP synthase of Rhodopseudomonas palustris (strain HaA2).